Reading from the N-terminus, the 432-residue chain is Probable exopolygalacturonase C (432 aa).

The N-terminal stretch at 1–20 is a signal peptide; sequence MPISKGIFLSLLSTLPLALA. 4 N-linked (GlcNAc...) asparagine glycosylation sites follow: Asn-33, Asn-73, Asn-90, and Asn-140. PbH1 repeat units lie at residues 206 to 227 and 229 to 250; these read GTNI…AVGS and SHDI…SIGS. Asp-220 (proton donor) is an active-site residue. Residue His-244 is part of the active site. The N-linked (GlcNAc...) asparagine glycan is linked to Asn-260. Residues 261–282 form a PbH1 3 repeat; the sequence is ITNLRFEDVTVIDALYAARFKS. N-linked (GlcNAc...) asparagine glycans are attached at residues Asn-292 and Asn-302. A disulfide bridge links Cys-377 with Cys-383. Residue Asn-407 is glycosylated (N-linked (GlcNAc...) asparagine).

It belongs to the glycosyl hydrolase 28 family.

It is found in the secreted. It catalyses the reaction [(1-&gt;4)-alpha-D-galacturonosyl](n) + H2O = alpha-D-galacturonate + [(1-&gt;4)-alpha-D-galacturonosyl](n-1). Its function is as follows. Specific in hydrolyzing the terminal glycosidic bond of polygalacturonic acid and oligogalacturonates. The sequence is that of Probable exopolygalacturonase C (pgxC) from Aspergillus terreus (strain NIH 2624 / FGSC A1156).